Consider the following 181-residue polypeptide: Isopentenyl-diphosphate Delta-isomerase (181 aa).

Mn(2+) is bound by residues H25 and H32. The 135-residue stretch at 30–164 (PLHLAFSCWL…PWAFSPWMVM (135 aa)) folds into the Nudix hydrolase domain. C67 is a catalytic residue. C67 provides a ligand contact to Mg(2+). H69 contributes to the Mn(2+) binding site. Residue E87 participates in Mg(2+) binding. The Mn(2+) site is built by E114 and E116. Residue E116 is part of the active site.

This sequence belongs to the IPP isomerase type 1 family. Homodimer. Requires Mg(2+) as cofactor. It depends on Mn(2+) as a cofactor.

The protein localises to the cytoplasm. The enzyme catalyses isopentenyl diphosphate = dimethylallyl diphosphate. The protein operates within isoprenoid biosynthesis; dimethylallyl diphosphate biosynthesis; dimethylallyl diphosphate from isopentenyl diphosphate: step 1/1. Functionally, catalyzes the 1,3-allylic rearrangement of the homoallylic substrate isopentenyl (IPP) to its highly electrophilic allylic isomer, dimethylallyl diphosphate (DMAPP). In Salmonella choleraesuis (strain SC-B67), this protein is Isopentenyl-diphosphate Delta-isomerase.